The following is a 493-amino-acid chain: Glutamyl-tRNA(Gln) amidotransferase subunit A (493 aa).

Residues Lys-79 and Ser-159 each act as charge relay system in the active site. Ser-183 serves as the catalytic Acyl-ester intermediate.

Belongs to the amidase family. GatA subfamily. In terms of assembly, heterotrimer of A, B and C subunits.

It carries out the reaction L-glutamyl-tRNA(Gln) + L-glutamine + ATP + H2O = L-glutaminyl-tRNA(Gln) + L-glutamate + ADP + phosphate + H(+). Allows the formation of correctly charged Gln-tRNA(Gln) through the transamidation of misacylated Glu-tRNA(Gln) in organisms which lack glutaminyl-tRNA synthetase. The reaction takes place in the presence of glutamine and ATP through an activated gamma-phospho-Glu-tRNA(Gln). The chain is Glutamyl-tRNA(Gln) amidotransferase subunit A from Allorhizobium ampelinum (strain ATCC BAA-846 / DSM 112012 / S4) (Agrobacterium vitis (strain S4)).